The chain runs to 388 residues: Succinate--CoA ligase [ADP-forming] subunit beta (388 aa).

An ATP-grasp domain is found at 9–244 (KDLLVSYDIA…PSQENVRDVL (236 aa)). Residues K46, 53 to 55 (GRG), V102, and E107 each bind ATP. N199 and D213 together coordinate Mg(2+). Residues N264 and 321–323 (GIM) contribute to the substrate site.

The protein belongs to the succinate/malate CoA ligase beta subunit family. In terms of assembly, heterotetramer of two alpha and two beta subunits. Mg(2+) serves as cofactor.

It carries out the reaction succinate + ATP + CoA = succinyl-CoA + ADP + phosphate. It catalyses the reaction GTP + succinate + CoA = succinyl-CoA + GDP + phosphate. The protein operates within carbohydrate metabolism; tricarboxylic acid cycle; succinate from succinyl-CoA (ligase route): step 1/1. In terms of biological role, succinyl-CoA synthetase functions in the citric acid cycle (TCA), coupling the hydrolysis of succinyl-CoA to the synthesis of either ATP or GTP and thus represents the only step of substrate-level phosphorylation in the TCA. The beta subunit provides nucleotide specificity of the enzyme and binds the substrate succinate, while the binding sites for coenzyme A and phosphate are found in the alpha subunit. In Chlamydia caviae (strain ATCC VR-813 / DSM 19441 / 03DC25 / GPIC) (Chlamydophila caviae), this protein is Succinate--CoA ligase [ADP-forming] subunit beta.